Reading from the N-terminus, the 749-residue chain is Signal transducer and activator of transcription 4 (749 aa).

An SH2 domain is found at 570–665 (WIDGYIMGFV…ENPLKYLYPD (96 aa)). Residue Lys668 is modified to N6-acetyllysine. A Phosphotyrosine; by JAK modification is found at Tyr694. The residue at position 722 (Ser722) is a Phosphoserine.

It belongs to the transcription factor STAT family. Forms a homodimer or a heterodimer with a related family member. Interacts with ARL2BP. Interacts with STAT1. Interacts with JUN; this complex efficiently interacts with the AP-1-related sequence of the IFN-gamma promoter. In terms of processing, acetylation at Lys-668 is required for JAK2-mediated phosphorylation and activation of STAT4. Tyrosine phosphorylated upon IL12 and IFN-alpha activation, but not by IFN-gamma in T-lymphocytes and NK cells. Serine phosphorylation is required for maximal transcriptional activity but not for DNA binding. Phosphorylation by MAP2K6 at Ser-722 is required for full transcriptional activity induced by IL12. However this serine phosphorylation is not required for cell proliferation although critical for IFN-gamma production. In terms of tissue distribution, expression is restricted to testis, thymus, and spleen.

It localises to the cytoplasm. It is found in the nucleus. Functionally, transcriptional regulator mainly expressed in hematopoietic cells that plays a critical role in cellular growth, differentiation and immune response. Plays a key role in the differentiation of T-helper 1 cells and the production of interferon-gamma. Also participates in multiple neutrophil functions including chemotaxis and production of the neutrophil extracellular traps. After IL12 binding to its receptor IL12RB2, STAT4 interacts with the intracellular domain of IL12RB2 and becomes tyrosine phosphorylated. Phosphorylated STAT4 then homodimerizes and migrates to the nucleus where it can recognize STAT target sequences present in IL12 responsive genes. Although IL12 appears to be the predominant activating signal, STAT4 can also be phosphorylated and activated in response to IFN-gamma stimulation via JAK1 and TYK2 and in response to different interleukins including IL23, IL2 and IL35. Transcription activation of IFN-gamma gene is mediated by interaction with JUN that forms a complex that efficiently interacts with the AP-1-related sequence of the IFN-gamma promoter. In response to IFN-alpha/beta signaling, acts as a transcriptional repressor and suppresses IL5 and IL13 mRNA expression during response to T-cell receptor (TCR) activation. The protein is Signal transducer and activator of transcription 4 (Stat4) of Mus musculus (Mouse).